A 182-amino-acid polypeptide reads, in one-letter code: Keratin, type II cytoskeletal 60 kDa, component III (182 aa).

In terms of domain architecture, IF rod spans 1-63; it reads ERGELALKDA…KLLEGEECRL (63 aa). Residues 1-63 are coil 2; it reads ERGELALKDA…KLLEGEECRL (63 aa). Residues 63–182 form a tail region; that stretch reads LSGEGVGPVN…TSSSRKSFKS (120 aa). Positions 157 to 182 are disordered; the sequence is FGSGGGSSSSVKFVSTTSSSRKSFKS. A compositionally biased stretch (low complexity) spans 164 to 182; it reads SSSVKFVSTTSSSRKSFKS.

Belongs to the intermediate filament family. In terms of assembly, heterotetramer of two type I and two type II keratins.

This Bos taurus (Bovine) protein is Keratin, type II cytoskeletal 60 kDa, component III.